The chain runs to 357 residues: 3-isopropylmalate dehydrogenase (357 aa).

G76 to E89 is an NAD(+) binding site. Substrate is bound by residues R96, R106, R134, and D224. Mg(2+) is bound by residues D224, D248, and D252. Residue G282–N294 participates in NAD(+) binding.

It belongs to the isocitrate and isopropylmalate dehydrogenases family. LeuB type 1 subfamily. As to quaternary structure, homodimer. The cofactor is Mg(2+). Mn(2+) serves as cofactor.

The protein resides in the cytoplasm. It catalyses the reaction (2R,3S)-3-isopropylmalate + NAD(+) = 4-methyl-2-oxopentanoate + CO2 + NADH. It participates in amino-acid biosynthesis; L-leucine biosynthesis; L-leucine from 3-methyl-2-oxobutanoate: step 3/4. Functionally, catalyzes the oxidation of 3-carboxy-2-hydroxy-4-methylpentanoate (3-isopropylmalate) to 3-carboxy-4-methyl-2-oxopentanoate. The product decarboxylates to 4-methyl-2 oxopentanoate. The sequence is that of 3-isopropylmalate dehydrogenase from Saccharophagus degradans (strain 2-40 / ATCC 43961 / DSM 17024).